Here is a 182-residue protein sequence, read N- to C-terminus: Unknown protein 1 (182 aa).

In Helianthus annuus (Common sunflower), this protein is Unknown protein 1.